The chain runs to 1607 residues: Putative molluscan insulin-related peptide(s) receptor (1607 aa).

Residues 1-35 (MHPGSISFNMIINKCIPICLFILFIMMMEFTVSKA) form the signal peptide. N-linked (GlcNAc...) asparagine glycosylation is found at Asn-82, Asn-188, Asn-245, Asn-275, Asn-332, Asn-343, Asn-495, Asn-520, Asn-663, Asn-710, Asn-778, Asn-796, Asn-802, Asn-868, Asn-879, Asn-940, and Asn-953. Fibronectin type-III domains follow at residues 517 to 632 (HDLN…TYPF), 636 to 726 (EPTD…SKEE), and 756 to 861 (LPDE…TKDS). The Extracellular portion of the chain corresponds to 698–975 (EKVKIEEEGK…RPPDPESSNT (278 aa)). The Fibronectin type-III 4 domain occupies 870–967 (TTVDTEIETN…LERFFIVPRP (98 aa)). The chain crosses the membrane as a helical span at residues 976-996 (LLIVAIVLAFFGVLTVSLIVA). Residues 997–1607 (CVYYKQKIRS…WSTLKMVLVL (611 aa)) are Cytoplasmic-facing. The Protein kinase domain maps to 1037–1308 (IKLIKELGQG…AIIEYLLPKL (272 aa)). ATP contacts are provided by residues 1043–1051 (LGQGSFGMV) and Lys-1072. Asp-1173 functions as the Proton acceptor in the catalytic mechanism. Tyr-1199 carries the phosphotyrosine; by autocatalysis modification. 2 disordered regions span residues 1328-1352 (GAGEGTLAEPEGSDDSSSINSLSCE) and 1501-1539 (TLNGNQSSHNNNSFELMTPDPLKSGPASESSNGVSSSSW). A compositionally biased stretch (polar residues) spans 1503-1515 (NGNQSSHNNNSFE). Residues 1524-1538 (SGPASESSNGVSSSS) show a composition bias toward low complexity.

Belongs to the protein kinase superfamily. Tyr protein kinase family. Insulin receptor subfamily. As to quaternary structure, probable tetramer of 2 alpha and 2 beta chains linked by disulfide bonds. The alpha chains contribute to the formation of the ligand-binding domain, while the beta chains carry the kinase domain. The cofactor is Mn(2+).

It localises to the membrane. The enzyme catalyses L-tyrosyl-[protein] + ATP = O-phospho-L-tyrosyl-[protein] + ADP + H(+). Functionally, this receptor probably binds to the four different molluscan insulin-related peptides and has a tyrosine-protein kinase activity. This chain is Putative molluscan insulin-related peptide(s) receptor, found in Lymnaea stagnalis (Great pond snail).